The sequence spans 413 residues: Putative competence-damage inducible protein (413 aa).

Belongs to the CinA family.

The chain is Putative competence-damage inducible protein from Desulforudis audaxviator (strain MP104C).